Reading from the N-terminus, the 428-residue chain is 3-phosphoshikimate 1-carboxyvinyltransferase (428 aa).

3 residues coordinate 3-phosphoshikimate: lysine 22, serine 23, and arginine 27. Position 22 (lysine 22) interacts with phosphoenolpyruvate. Residues glycine 96 and arginine 124 each contribute to the phosphoenolpyruvate site. 3-phosphoshikimate contacts are provided by serine 170, serine 171, glutamine 172, serine 198, aspartate 314, asparagine 337, and lysine 341. Glutamine 172 contributes to the phosphoenolpyruvate binding site. Aspartate 314 functions as the Proton acceptor in the catalytic mechanism. Positions 345, 387, and 412 each coordinate phosphoenolpyruvate.

It belongs to the EPSP synthase family. As to quaternary structure, monomer.

It localises to the cytoplasm. It carries out the reaction 3-phosphoshikimate + phosphoenolpyruvate = 5-O-(1-carboxyvinyl)-3-phosphoshikimate + phosphate. It participates in metabolic intermediate biosynthesis; chorismate biosynthesis; chorismate from D-erythrose 4-phosphate and phosphoenolpyruvate: step 6/7. Catalyzes the transfer of the enolpyruvyl moiety of phosphoenolpyruvate (PEP) to the 5-hydroxyl of shikimate-3-phosphate (S3P) to produce enolpyruvyl shikimate-3-phosphate and inorganic phosphate. The protein is 3-phosphoshikimate 1-carboxyvinyltransferase of Photobacterium profundum (strain SS9).